Here is a 37-residue protein sequence, read N- to C-terminus: Large ribosomal subunit protein bL36 (37 aa).

The protein belongs to the bacterial ribosomal protein bL36 family.

The polypeptide is Large ribosomal subunit protein bL36 (Thermobifida fusca (strain YX)).